The sequence spans 264 residues: DNA-binding HTH-type transcriptional repressor TrmBL2 (264 aa).

Positions 81–113 form a coiled coil; sequence LEKFIEEWQERVKEELEAKKKAKEELIELMKPL.

This sequence belongs to the transcriptional regulator TrmB family.

Its subcellular location is the cytoplasm. It is found in the chromosome. Its function is as follows. An abundant chromosomal protein that seems to be involved in both genome architecture and transcription repression. Incubation with DNA in vitro gives fibrous structures 14.2 +/- 2.1 nm in thickness (naked DNA is 1.83 +/- 0.37 nm); does not significantly compact DNA. Binds to both coding and non-coding regions; binding within gene promoters correlates with decreased transcript levels, while binding within coding regions does not. In Thermococcus kodakarensis (strain ATCC BAA-918 / JCM 12380 / KOD1) (Pyrococcus kodakaraensis (strain KOD1)), this protein is DNA-binding HTH-type transcriptional repressor TrmBL2.